Consider the following 199-residue polypeptide: NAD(P)H dehydrogenase (quinone) (199 aa).

In terms of domain architecture, Flavodoxin-like spans 4-190 (ILVLYYSMYG…TIARYQGEHV (187 aa)). Residues 10-15 (SMYGHI) and 79-81 (TRF) each bind FMN. Residue tyrosine 12 coordinates NAD(+). Tryptophan 99 is a binding site for substrate. Residues 114-119 (STGTGG) and histidine 134 each bind FMN.

The protein belongs to the WrbA family. Requires FMN as cofactor.

The catalysed reaction is a quinone + NADH + H(+) = a quinol + NAD(+). The enzyme catalyses a quinone + NADPH + H(+) = a quinol + NADP(+). In Serratia proteamaculans (strain 568), this protein is NAD(P)H dehydrogenase (quinone).